The primary structure comprises 474 residues: tRNA-2-methylthio-N(6)-dimethylallyladenosine synthase (474 aa).

Positions 3–120 constitute an MTTase N-terminal domain; sequence KKLHIKTWGC…LPEMIEQVRR (118 aa). The [4Fe-4S] cluster site is built by Cys-12, Cys-49, Cys-83, Cys-157, Cys-161, and Cys-164. Residues 143–375 form the Radical SAM core domain; the sequence is RAEGPTAFVS…QDRITQQAMR (233 aa). The 64-residue stretch at 378–441 folds into the TRAM domain; sequence RHMMGTVQRI…TNSLRGKFIR (64 aa).

This sequence belongs to the methylthiotransferase family. MiaB subfamily. As to quaternary structure, monomer. It depends on [4Fe-4S] cluster as a cofactor.

It localises to the cytoplasm. The catalysed reaction is N(6)-dimethylallyladenosine(37) in tRNA + (sulfur carrier)-SH + AH2 + 2 S-adenosyl-L-methionine = 2-methylsulfanyl-N(6)-dimethylallyladenosine(37) in tRNA + (sulfur carrier)-H + 5'-deoxyadenosine + L-methionine + A + S-adenosyl-L-homocysteine + 2 H(+). Functionally, catalyzes the methylthiolation of N6-(dimethylallyl)adenosine (i(6)A), leading to the formation of 2-methylthio-N6-(dimethylallyl)adenosine (ms(2)i(6)A) at position 37 in tRNAs that read codons beginning with uridine. The polypeptide is tRNA-2-methylthio-N(6)-dimethylallyladenosine synthase (Shewanella oneidensis (strain ATCC 700550 / JCM 31522 / CIP 106686 / LMG 19005 / NCIMB 14063 / MR-1)).